Consider the following 331-residue polypeptide: Ribosomal RNA small subunit methyltransferase H (331 aa).

S-adenosyl-L-methionine contacts are provided by residues 38–40 (GGY), Asp-56, Phe-83, Asp-100, and Gln-107. The segment at 289–331 (AELAENPRARSARLRVGVRTDAPAGKVDPQALGTPLIPKKGRR) is disordered.

The protein belongs to the methyltransferase superfamily. RsmH family.

The protein resides in the cytoplasm. The enzyme catalyses cytidine(1402) in 16S rRNA + S-adenosyl-L-methionine = N(4)-methylcytidine(1402) in 16S rRNA + S-adenosyl-L-homocysteine + H(+). In terms of biological role, specifically methylates the N4 position of cytidine in position 1402 (C1402) of 16S rRNA. The sequence is that of Ribosomal RNA small subunit methyltransferase H from Cereibacter sphaeroides (strain ATCC 17029 / ATH 2.4.9) (Rhodobacter sphaeroides).